The primary structure comprises 433 residues: Monodehydroascorbate reductase (433 aa).

Residues glycine 13–serine 16, glutamate 40, arginine 47, lysine 52, isoleucine 95, and arginine 146–glutamate 147 contribute to the FAD site. Residues glycine 171 to glutamate 177, glutamate 195, arginine 201, and glycine 260 contribute to the NAD(+) site. Tyrosine 173–glutamate 177 lines the NADP(+) pocket. NADP(+)-binding residues include arginine 201 and glycine 260. Position 297 (aspartate 297) interacts with FAD. Residue glutamate 313 to histidine 314 participates in NAD(+) binding. Glutamate 313–histidine 314 contacts NADP(+). Residue valine 315 coordinates FAD. Arginine 319 lines the L-ascorbate pocket. Tyrosine 348 is a binding site for FAD. Tyrosine 348 provides a ligand contact to NAD(+). NADP(+) is bound at residue tyrosine 348. Arginine 350 contacts L-ascorbate.

It belongs to the FAD-dependent oxidoreductase family. The cofactor is FAD. Expressed in leaves, and to a lesser degree in stems, roots and all stages of fruit.

The protein localises to the cytoplasm. It catalyses the reaction 2 monodehydro-L-ascorbate radical + NADH + H(+) = 2 L-ascorbate + NAD(+). Catalyzes the conversion of monodehydroascorbate to ascorbate, oxidizing NADH in the process. This chain is Monodehydroascorbate reductase, found in Solanum lycopersicum (Tomato).